The chain runs to 123 residues: Protein lgg-1 (123 aa).

The Phosphatidylethanolamine amidated glycine moiety is linked to residue glycine 116. The propeptide at 117–123 (GEVEKKE) is removed in mature form.

It belongs to the ATG8 family. In terms of assembly, interacts with sepa-1 (via the LIR motifs); the interaction is direct. Interacts with allo-1 (via the LIR motif). Interacts with sqst-1 (via the LIR motifs); the interaction is direct. Both lipidated and unlipidated forms interact with epg-7 (via the LIR motif); the interaction is direct. Interacts with epg-2 (via the LIR motifs); the interaction is direct. Interacts with atg-13; the interaction is direct. Interacts with unc-51 (via the LIR motif); the interaction is direct. Interacts with atg-7; the interaction is direct. Interacts with atg-3. The interaction with atg-7 and atg-3 may be required for the lipidation of lgg-1. Cleaved by atg-4.1 and/or atg-4.2, after Gly-116 to form a thioester bond with 'Cys-523' of atg-7 (E1-like activating enzyme) before being transferred to 'Cys-255' of atg-3 (E2 conjugating enzyme), in order to be amidated with phosphatidylethanolamine. This lipid modification anchors lgg-1 to membranes and can be reversed by atg-4.2, releasing soluble lgg-1. C-terminal cleavage is essential for autophagosome initiation and biogenesis. Lipidation is not essential for autophagy or development but the lipidated form is involved in cargo recognition and autophagosome biogenesis. Lipidation regulates lgg-2-positive autophagosome formation. Expressed in PLML touch receptor neuron and in the ventral nerve cord. Expressed in AIY interneurons.

Its subcellular location is the preautophagosomal structure. It is found in the cytoplasmic vesicle. The protein localises to the autophagosome. The protein resides in the autophagosome membrane. It localises to the lysosome lumen. Its subcellular location is the mitochondrion. It is found in the cytoplasm. The protein localises to the phagosome membrane. The protein resides in the cell membrane. It localises to the cell projection. Its subcellular location is the dendrite. It is found in the perikaryon. Ubiquitin-like modifier involved in the formation of autophagosomal vacuoles (autophagosomes). When lipidated mediates tethering between adjacent membranes and stimulates membrane fusion during autophagy. Recruits lipidated-lgg-2 to maturing autophagosomes. Acts in the aggrephagy pathway, which is the macroautophagic degradation of ubiquitinated protein aggregates, and preferentially interacts with autophagy proteins and substrates containing LIR motifs to mediate autophagosome formation and protein aggregate degradation. In particular, binds to components of the unc-51-atg-13 complex to regulate autophagosome formation and cargo sequestration. Required for the degradation of specific sepa-1- and sqst-1-containing protein aggregates during embryogenesis. Involved in allophagy, which is an autophagic process in which paternal mitochondria and organelles are degraded during fertilization, and moreover is required for the formation of lgg-2-positive allophagic autophagosomes in embryos. Involved in the clearance of apoptotic cells by promoting the delivery of engulfed apoptotic cells to the lysosome. Plays a role in the distribution and clearance of germ cell specific P-granules from somatic cells. Also plays a role in the autophagy-mediated degradation of ribosomal RNA and ribosomal proteins in lysosomes. Involved in xenophagy, the autophagy-mediated degradation of pathogens and pathogen products, such as toxins. Required for normal survival when exposed to pathogenic bacteria S.typhimurium probably by promoting autophagic degradation of intracellular S.typhimurium. Also plays a role in membrane-pore repair. Plays a role in mitophagy. Essential for dauer development and longevity, including longevity in response to moderate, short-term heat shock, also known as a hormetic heat shock. In Caenorhabditis elegans, this protein is Protein lgg-1.